Reading from the N-terminus, the 449-residue chain is Glutathione reductase (449 aa).

Residues Ser-15, Gly-16, Glu-35, Thr-42, Cys-43, and Lys-51 each coordinate FAD. Position 15 (Ser-15) interacts with glutathione. Cysteines 43 and 48 form a disulfide. Tyr-99 contacts glutathione. Ala-115 is a binding site for FAD. NADP(+)-binding residues include Gly-175, Ile-178, Glu-181, Arg-198, Arg-204, and Gly-261. 2 residues coordinate FAD: Asp-302 and Thr-310. Ala-340 lines the NADP(+) pocket. His-435 contacts FAD. His-435 (proton acceptor) is an active-site residue.

The protein belongs to the class-I pyridine nucleotide-disulfide oxidoreductase family. As to quaternary structure, homodimer. The cofactor is FAD.

Its subcellular location is the cytoplasm. It carries out the reaction 2 glutathione + NADP(+) = glutathione disulfide + NADPH + H(+). It functions in the pathway xenobiotic degradation; (2,4,5-trichlorophenoxy)acetate degradation. In terms of biological role, catalyzes the reduction of glutathione disulfide (GSSG) to reduced glutathione (GSH). Constitutes the major mechanism to maintain a high GSH:GSSG ratio in the cytosol. The protein is Glutathione reductase (gor) of Burkholderia cepacia (Pseudomonas cepacia).